A 273-amino-acid polypeptide reads, in one-letter code: Translation initiation factor 2 subunit alpha (273 aa).

Residues 12–83 (GEFVVATVKN…EKGHIDLSLK (72 aa)) enclose the S1 motif domain.

Belongs to the eIF-2-alpha family. Heterotrimer composed of an alpha, a beta and a gamma chain.

Functionally, eIF-2 functions in the early steps of protein synthesis by forming a ternary complex with GTP and initiator tRNA. This Thermococcus gammatolerans (strain DSM 15229 / JCM 11827 / EJ3) protein is Translation initiation factor 2 subunit alpha.